We begin with the raw amino-acid sequence, 479 residues long: Transcript termination protein A18 (479 aa).

A Helicase ATP-binding domain is found at 99 to 255 (KNKHKRPTYI…NDIINVSNSL (157 aa)). 112 to 119 (LACGFGKT) is an ATP binding site. The short motif at 205 to 208 (DESH) is the DESH box element. The Helicase C-terminal domain maps to 308–469 (ILDTIIYDFN…EKKGKKKELA (162 aa)).

Belongs to the helicase family. Poxviruses subfamily. As to quaternary structure, interacts with G2. Might be part of a transcription complex composed at least of G2, A18, and H5.

It is found in the virion. In terms of biological role, DNA helicase which seems to act as a postreplicative transcription termination factor. Involved in ATP-dependent release of nascent RNA. Forms a stable complex with single-stranded DNA, and to a lesser extent RNA. The sequence is that of Transcript termination protein A18 from Homo sapiens (Human).